Consider the following 203-residue polypeptide: Holliday junction branch migration complex subunit RuvA (203 aa).

The segment at 1 to 64 is domain I; it reads MIGRLRGIVL…EDAQLLFGFN (64 aa). Residues 65-142 are domain II; the sequence is NKQERTLFRE…KGLHGDLFTP (78 aa). The segment at 143 to 154 is flexible linker; that stretch reads AADLVLTSPASP. Positions 155–203 are domain III; that stretch reads AVDDAEAEAVAALVSLGYKPQEASRMVSKVAQADASSETLIREALRAAL.

Belongs to the RuvA family. As to quaternary structure, homotetramer. Forms an RuvA(8)-RuvB(12)-Holliday junction (HJ) complex. HJ DNA is sandwiched between 2 RuvA tetramers; dsDNA enters through RuvA and exits via RuvB. An RuvB hexamer assembles on each DNA strand where it exits the tetramer. Each RuvB hexamer is contacted by two RuvA subunits (via domain III) on 2 adjacent RuvB subunits; this complex drives branch migration. In the full resolvosome a probable DNA-RuvA(4)-RuvB(12)-RuvC(2) complex forms which resolves the HJ.

The protein localises to the cytoplasm. Functionally, the RuvA-RuvB-RuvC complex processes Holliday junction (HJ) DNA during genetic recombination and DNA repair, while the RuvA-RuvB complex plays an important role in the rescue of blocked DNA replication forks via replication fork reversal (RFR). RuvA specifically binds to HJ cruciform DNA, conferring on it an open structure. The RuvB hexamer acts as an ATP-dependent pump, pulling dsDNA into and through the RuvAB complex. HJ branch migration allows RuvC to scan DNA until it finds its consensus sequence, where it cleaves and resolves the cruciform DNA. The sequence is that of Holliday junction branch migration complex subunit RuvA from Cronobacter sakazakii (strain ATCC BAA-894) (Enterobacter sakazakii).